A 125-amino-acid polypeptide reads, in one-letter code: Large ribosomal subunit protein mL51 (125 aa).

The N-terminal 29 residues, 1-29 (MWSVQKLLWGCRSLLPQGCRSFSLGNRDL), are a transit peptide targeting the mitochondrion.

This sequence belongs to the mitochondrion-specific ribosomal protein mL51 family. Component of the mitochondrial ribosome large subunit (39S) which comprises a 16S rRNA and about 50 distinct proteins.

It is found in the mitochondrion. In Xenopus laevis (African clawed frog), this protein is Large ribosomal subunit protein mL51 (mrpl51).